We begin with the raw amino-acid sequence, 150 residues long: Ribosome-binding factor A (150 aa).

Residues 119-150 form a disordered region; it reads VAERAKSAQPAGEPDPYRFDGAAAADDDEPAT.

The protein belongs to the RbfA family. Monomer. Binds 30S ribosomal subunits, but not 50S ribosomal subunits or 70S ribosomes.

It localises to the cytoplasm. One of several proteins that assist in the late maturation steps of the functional core of the 30S ribosomal subunit. Associates with free 30S ribosomal subunits (but not with 30S subunits that are part of 70S ribosomes or polysomes). Required for efficient processing of 16S rRNA. May interact with the 5'-terminal helix region of 16S rRNA. The chain is Ribosome-binding factor A from Acidothermus cellulolyticus (strain ATCC 43068 / DSM 8971 / 11B).